An 88-amino-acid polypeptide reads, in one-letter code: Large ribosomal subunit protein eL31 (88 aa).

The protein belongs to the eukaryotic ribosomal protein eL31 family.

The sequence is that of Large ribosomal subunit protein eL31 (rpl31e) from Archaeoglobus fulgidus (strain ATCC 49558 / DSM 4304 / JCM 9628 / NBRC 100126 / VC-16).